The primary structure comprises 104 residues: Co-chaperonin GroES (104 aa).

Belongs to the GroES chaperonin family. Heptamer of 7 subunits arranged in a ring. Interacts with the chaperonin GroEL.

It localises to the cytoplasm. In terms of biological role, together with the chaperonin GroEL, plays an essential role in assisting protein folding. The GroEL-GroES system forms a nano-cage that allows encapsulation of the non-native substrate proteins and provides a physical environment optimized to promote and accelerate protein folding. GroES binds to the apical surface of the GroEL ring, thereby capping the opening of the GroEL channel. The protein is Co-chaperonin GroES of Acidiphilium cryptum (strain JF-5).